Here is a 449-residue protein sequence, read N- to C-terminus: Exodeoxyribonuclease 7 large subunit (449 aa).

This sequence belongs to the XseA family. In terms of assembly, heterooligomer composed of large and small subunits.

It is found in the cytoplasm. The enzyme catalyses Exonucleolytic cleavage in either 5'- to 3'- or 3'- to 5'-direction to yield nucleoside 5'-phosphates.. Its function is as follows. Bidirectionally degrades single-stranded DNA into large acid-insoluble oligonucleotides, which are then degraded further into small acid-soluble oligonucleotides. This is Exodeoxyribonuclease 7 large subunit from Salmonella heidelberg (strain SL476).